We begin with the raw amino-acid sequence, 169 residues long: Probable NADH dehydrogenase [ubiquinone] 1 alpha subcomplex subunit 5, mitochondrial (169 aa).

The N-terminal 11 residues, 1-11 (MFLRAIGRPLL), are a transit peptide targeting the mitochondrion.

This sequence belongs to the complex I NDUFA5 subunit family. In terms of assembly, complex I is composed of at least 49 different subunits.

The protein localises to the mitochondrion inner membrane. In terms of biological role, accessory subunit of the mitochondrial membrane respiratory chain NADH dehydrogenase (Complex I), that is believed not to be involved in catalysis. Complex I functions in the transfer of electrons from NADH to the respiratory chain. The immediate electron acceptor for the enzyme is believed to be ubiquinone. This Arabidopsis thaliana (Mouse-ear cress) protein is Probable NADH dehydrogenase [ubiquinone] 1 alpha subcomplex subunit 5, mitochondrial.